Consider the following 211-residue polypeptide: BAG family molecular chaperone regulator 2 (211 aa).

N-acetylalanine is present on alanine 2. 3 positions are modified to phosphoserine: serine 20, serine 31, and serine 73. Residues 20-61 adopt a coiled-coil conformation; it reads SMADRSSRLLESLDQLELRVEALREAATAVEQEKEVLLEMIH. Positions 109–189 constitute a BAG domain; it reads SLKHATRIID…NIENADKAIK (81 aa).

As to quaternary structure, binds to the ATPase domain of HSP/HSC70 chaperones. May interact with NWD1. Interacts with HSPA1A (via NBD), HSPA1B (via NBD) and HSPA8. May interact with DNJC9; the interaction seems to be histone-dependent.

Co-chaperone for HSP70 and HSC70 chaperone proteins. Acts as a nucleotide-exchange factor (NEF) promoting the release of ADP from the HSP70 and HSC70 proteins thereby triggering client/substrate protein release. In Bos taurus (Bovine), this protein is BAG family molecular chaperone regulator 2.